A 1047-amino-acid polypeptide reads, in one-letter code: [F-actin]-monooxygenase MICAL1 (1047 aa).

Residues 1–489 are monooxygenase domain; it reads MASPTSTNPA…QDLYDIMDKE (489 aa). Residues C95, 114-116, 121-123, F181, Y293, and D393 each bind FAD; these read EKR and RHN. T475 bears the Phosphothreonine mark. The region spanning 507–611 is the Calponin-homology (CH) domain; the sequence is SAGTEELLHW…YLSHFHSAFK (105 aa). S616 carries the post-translational modification Phosphoserine. The tract at residues 644-672 is disordered; it reads RTKVEEETPCTEEPPVSEPSVPPALPSEH. The segment covering 659 to 668 has biased composition (pro residues); that stretch reads VSEPSVPPAL. Residues 679–741 form the LIM zinc-binding domain; it reads DVCELCGKRL…LQHLPQEDQK (63 aa). Residues C681, C684, H702, C705, C708, C711, C731, and H734 each coordinate Zn(2+). Disordered stretches follow at residues 739 to 787 and 849 to 872; these read DQKE…QPAR and EKGE…PPPL. The segment covering 745–767 has biased composition (polar residues); it reads NNGSPENQELPTPGDSTTQSGPS. 2 positions are modified to phosphoserine: S777 and S781. Positions 851–868 are enriched in acidic residues; sequence GEEEEEEEEEEEEEEEEL. One can recognise a bMERB domain in the interval 905–1047; sequence KEEEMKRFCK…EERRLREMPV (143 aa). Positions 912-996 form a coiled coil; the sequence is FCKAQAIQRR…LEEKQRQLDH (85 aa).

This sequence belongs to the Mical family. As to quaternary structure, interacts with STK38 and STK38L. Associates with the SH3 domain of NEDD9. Interacts with VIM and PLXNA3. Interacts with RAB1B, RAB8A, RAB10, RAB13 and RAB15 (in their GTP-bound forms); binding to RAB1B is of low affinity compared to other Rab proteins; at least in case of RAB8A and RAB10 can bind 2 molecules of the Rab proteins simultaneously. Interacts with GRAF1/ARHGAP26, GRAF2/ARHGAP10, RAB8A, RAB8B and RAB10; may bind simultaneously to GRAFs and Rabs and connects GRAFs to Rabs. Does not interact with RAB1 and RAB11A. Requires FAD as cofactor.

It is found in the cytoplasm. It localises to the cytoskeleton. Its subcellular location is the endosome membrane. The protein localises to the midbody. It carries out the reaction L-methionyl-[F-actin] + NADPH + O2 + H(+) = L-methionyl-(R)-S-oxide-[F-actin] + NADP(+) + H2O. The enzyme catalyses NADPH + O2 + H(+) = H2O2 + NADP(+). Monooxygenase that promotes depolymerization of F-actin by mediating oxidation of specific methionine residues on actin to form methionine-sulfoxide, resulting in actin filament disassembly and preventing repolymerization. In the absence of actin, it also functions as a NADPH oxidase producing H(2)O(2). Acts as a cytoskeletal regulator that connects NEDD9 to intermediate filaments. Also acts as a negative regulator of apoptosis via its interaction with STK38 and STK38L; acts by antagonizing STK38 and STK38L activation by MST1/STK4. Involved in regulation of lamina-specific connectivity in the nervous system such as the development of lamina-restricted hippocampal connections. Through redox regulation of the actin cytoskeleton controls the intracellular distribution of secretory vesicles containing L1/neurofascin/NgCAM family proteins in neurons, thereby regulating their cell surface levels. May act as Rab effector protein and play a role in vesicle trafficking. Promotes endosomal tubule extension by associating with RAB8 (RAB8A or RAB8B), RAB10 and GRAF (GRAF1/ARHGAP26 or GRAF2/ARHGAP10) on the endosomal membrane which may connect GRAFs to Rabs, thereby participating in neosynthesized Rab8-Rab10-Rab11-dependent protein export. This is [F-actin]-monooxygenase MICAL1 (Mical1) from Rattus norvegicus (Rat).